Here is a 190-residue protein sequence, read N- to C-terminus: Orotate phosphoribosyltransferase (190 aa).

114–122 (EDVITTGGS) lines the 5-phospho-alpha-D-ribose 1-diphosphate pocket. Orotate contacts are provided by Thr-118 and Arg-146.

Belongs to the purine/pyrimidine phosphoribosyltransferase family. PyrE subfamily. Homodimer. Requires Mg(2+) as cofactor.

It carries out the reaction orotidine 5'-phosphate + diphosphate = orotate + 5-phospho-alpha-D-ribose 1-diphosphate. The protein operates within pyrimidine metabolism; UMP biosynthesis via de novo pathway; UMP from orotate: step 1/2. Its function is as follows. Catalyzes the transfer of a ribosyl phosphate group from 5-phosphoribose 1-diphosphate to orotate, leading to the formation of orotidine monophosphate (OMP). This is Orotate phosphoribosyltransferase from Caldicellulosiruptor bescii (strain ATCC BAA-1888 / DSM 6725 / KCTC 15123 / Z-1320) (Anaerocellum thermophilum).